The following is a 470-amino-acid chain: Dendritic cell-specific transmembrane protein (470 aa).

At 1–34 (MGIWTSGTDIFLSLWEIYVSPRSPGWMDFIQHLG) the chain is on the cytoplasmic side. Residues 35–55 (VCCLVALISVGLLSVAACWFL) form a helical membrane-spanning segment. Residues 56–57 (PS) are Extracellular-facing. A helical transmembrane segment spans residues 58–78 (IIAAAASWIITCVLLCCSKHA). Residues 79-97 (RCFILLVFLSCGLREGRNA) lie on the Cytoplasmic side of the membrane. A helical membrane pass occupies residues 98–118 (LIAAGTGIVILGHVENIFHNF). Over 119 to 209 (KGLLDGMTCN…MATTTEVLSS (91 aa)) the chain is Extracellular. A helical transmembrane segment spans residues 210–230 (LGQKLLAFAGLSLVLLGTGLF). At 231–292 (MKRFLGPCGW…FWPTPKERKN (62 aa)) the chain is on the cytoplasmic side. The helical transmembrane segment at 293–313 (LGLFFLPILIHLCIWVLFAAV) threads the bilayer. Topologically, residues 314-376 (DYLLYRLIFS…PKPKFLLSET (63 aa)) are extracellular. A helical membrane pass occupies residues 377-397 (WVPLSVILLILVMLGLLSSIL). Over 398–470 (MQLKILVSAS…QMDMASADKS (73 aa)) the chain is Cytoplasmic.

As to quaternary structure, monomer. Homodimer. Isoform 1 interacts (via the C-terminus cytoplasmic tail) with OS9 isoform 1 (via the C-terminus tail); the interaction induces DCSTAMP redistribution to the endoplasmic reticulum-Golgi intermediate compartment. Isoform 1 interacts (via the C-terminus cytoplasmic tail) with OS9 isoform 2 (via the C-terminus tail). Interacts with CREB3. In terms of processing, glycosylated. Preferentially expressed by dendritic cells (DCs). Detected in both immature and mature DCs. Highly expressed in lymph nodes, lung, kidney and liver. Expressed at lower levels in pancreas, bone marrow, spleen, leukocytes, in freshly isolated peripheral blood mononuclear cells (PBMC) and B-cells. Not expressed in freshly isolated monocytes.

It is found in the cell membrane. Its subcellular location is the endoplasmic reticulum membrane. The protein localises to the endoplasmic reticulum-Golgi intermediate compartment membrane. It localises to the endosome. Probable cell surface receptor that plays several roles in cellular fusion, cell differentiation, bone and immune homeostasis. Plays a role in TNFSF11-mediated osteoclastogenesis. Cooperates with OCSTAMP in modulating cell-cell fusion in both osteoclasts and foreign body giant cells (FBGCs). Participates in osteoclast bone resorption. Involved in inducing the expression of tartrate-resistant acid phosphatase in osteoclast precursors. Plays a role in haematopoietic stem cell differentiation of bone marrow cells toward the myeloid lineage. Inhibits the development of neutrophilic granulocytes. Plays also a role in the regulation of dendritic cell (DC) antigen presentation activity by controlling phagocytic activity. Involved in the maintenance of immune self-tolerance and avoidance of autoimmune reactions. In Homo sapiens (Human), this protein is Dendritic cell-specific transmembrane protein (DCSTAMP).